The sequence spans 1196 residues: DNA polymerase beta (1196 aa).

The protein belongs to the DNA polymerase type-B family.

It catalyses the reaction DNA(n) + a 2'-deoxyribonucleoside 5'-triphosphate = DNA(n+1) + diphosphate. In terms of biological role, DNA-directed DNA polymerase involved in viral DNA replication. The chain is DNA polymerase beta from African swine fever virus (isolate Pig/Kenya/KEN-50/1950) (ASFV).